The chain runs to 165 residues: PTS system glucose-specific EIIA component (165 aa).

The PTS EIIA type-1 domain occupies 34 to 138 (DPVFAQKMMG…SSITPIIISN (105 aa)). His71 and His86 together coordinate Zn(2+). His86 functions as the Tele-phosphohistidine intermediate; for EIIA activity in the catalytic mechanism. His86 is subject to Phosphohistidine; by HPr.

Heterodimer with glycerol kinase (glpk). It depends on Zn(2+) as a cofactor.

It localises to the cytoplasm. Its function is as follows. The phosphoenolpyruvate-dependent sugar phosphotransferase system (sugar PTS), a major carbohydrate active transport system, catalyzes the phosphorylation of incoming sugar substrates concomitantly with their translocation across the cell membrane. The enzyme II complex composed of PtsG and Crr is involved in glucose transport. The protein is PTS system glucose-specific EIIA component (crr) of Oceanobacillus iheyensis (strain DSM 14371 / CIP 107618 / JCM 11309 / KCTC 3954 / HTE831).